Here is a 309-residue protein sequence, read N- to C-terminus: Protein FdhE (309 aa).

It belongs to the FdhE family.

Its subcellular location is the cytoplasm. In terms of biological role, necessary for formate dehydrogenase activity. The sequence is that of Protein FdhE from Escherichia coli O139:H28 (strain E24377A / ETEC).